We begin with the raw amino-acid sequence, 296 residues long: Acetylglutamate kinase (296 aa).

Residues glycine 67–glycine 68, arginine 89, and asparagine 194 contribute to the substrate site.

Belongs to the acetylglutamate kinase family. ArgB subfamily.

It is found in the cytoplasm. It catalyses the reaction N-acetyl-L-glutamate + ATP = N-acetyl-L-glutamyl 5-phosphate + ADP. Its pathway is amino-acid biosynthesis; L-arginine biosynthesis; N(2)-acetyl-L-ornithine from L-glutamate: step 2/4. Catalyzes the ATP-dependent phosphorylation of N-acetyl-L-glutamate. This Brucella canis (strain ATCC 23365 / NCTC 10854 / RM-666) protein is Acetylglutamate kinase.